The primary structure comprises 1233 residues: Insulin receptor substrate 1 (1233 aa).

Ser3 bears the Phosphoserine mark. A mediates interaction with PHIP region spans residues Ser3 to Ser133. In terms of domain architecture, PH spans Asp12 to Asn115. Position 99 is a phosphoserine; by CK2 (Ser99). One can recognise an IRS-type PTB domain in the interval Phe155 to Phe259. The disordered stretch occupies residues Asp257 to Glu425. Positions Lys264–Ser276 are enriched in low complexity. Residues Ser265 and Ser302 each carry the phosphoserine; by RPS6KB1 modification. Phosphoserine; by IKKB, MAPK8 and RPS6KB1 is present on Ser307. Phosphoserine occurs at positions 318, 325, 340, and 343. Residues Thr349 to Ser358 are compositionally biased toward basic residues. 2 stretches are compositionally biased toward low complexity: residues Ser378–Ser399 and Ser407–Gly419. Ser414 is modified (phosphoserine). 2 positions are modified to phosphothreonine: Thr441 and Thr448. A Phosphotyrosine; by INSR modification is found at Tyr460. The short motif at Tyr460 to Met463 is the YXXM motif 1 element. Ser522 bears the Phosphoserine; by RPS6KB1 mark. Short sequence motifs (YXXM motif) lie at residues Tyr546 to Met549 and Tyr608 to Met611. The residue at position 608 (Tyr608) is a Phosphotyrosine; by INSR. Ser612 bears the Phosphoserine mark. Tyr628 bears the Phosphotyrosine; by INSR mark. The YXXM motif 4 signature appears at Tyr628 to Met631. Residue Ser632 is modified to Phosphoserine; by RPS6KB1 and ROCK2. Residues Gln651–Leu720 are disordered. At Tyr658 the chain carries Phosphotyrosine. The short motif at Tyr658–Met661 is the YXXM motif 5 element. Residues Ser662–Ser689 show a composition bias toward low complexity. The short motif at Tyr727–Met730 is the YXXM motif 6 element. The disordered stretch occupies residues Phe766–Thr985. Positions Arg771–Arg780 are enriched in basic and acidic residues. 2 stretches are compositionally biased toward low complexity: residues Arg785–Arg794 and Asp801–Ser810. Ser789 carries the phosphoserine; by AMPK and SIK2 modification. Ser887 is modified (phosphoserine). A phosphotyrosine; by INSR mark is found at Tyr891, Tyr935, and Tyr983. A GRB2-binding region spans residues Tyr891–Asn893. 3 consecutive short sequence motifs (YXXM motif) follow at residues Tyr935–Met938, Tyr983–Met986, and Tyr1006–Met1009. The interval Ala1015–Ser1137 is disordered. Residues Ser1032–Pro1042 show a composition bias toward low complexity. 2 stretches are compositionally biased toward polar residues: residues Gln1043 to His1052 and Thr1069 to Ala1081. Phosphoserine is present on residues Ser1096 and Ser1097. Gly residues predominate over residues Ala1116–Ser1129. Tyr1173 carries the phosphotyrosine; by INSR modification. Positions Leu1178–Gln1233 are disordered. Residue Lys1180 forms a Glycyl lysine isopeptide (Lys-Gly) (interchain with G-Cter in ubiquitin) linkage. Residues Gly1203 to Lys1227 show a composition bias toward polar residues. Position 1220 is a phosphotyrosine; by INSR (Tyr1220).

In terms of assembly, interacts (via phosphorylated YXXM motifs) with PIK3R1. Interacts with ROCK1. Interacts with GRB2. Interacts with SOCS7. Interacts (via IRS-type PTB domain) with IGF1R and INSR (via the tyrosine-phosphorylated NPXY motif). Interacts with UBTF and PIK3CA. Interacts (via PH domain) with PHIP. Interacts with FER. Interacts with ALK. Interacts with EIF2AK2/PKR. Interacts with GKAP1. Interacts with DGKZ in the absence of insulin; insulin stimulation decreases this interaction. Found in a ternary complex with DGKZ and PIP5K1A in the absence of insulin stimulation. Interacts with SQSTM1; the interaction is disrupted by the presence of tensin TNS2. Interacts with NCK1 (via SH2 domain). Interacts with NCK2 (via SH3 domain). Interacts with SH2B1; this interaction enhances leptin-induced activation of the PI3-kinase pathway. Interacts with DVL2; this interaction promotes the Wnt/beta-catenin signaling pathway. In terms of processing, serine phosphorylation of IRS1 is a mechanism for insulin resistance. Ser-307 phosphorylation inhibits insulin action through disruption of IRS1 interaction with the insulin receptor. Phosphorylation of Tyr-891 is required for GRB2-binding. Phosphorylated by ALK. Phosphorylated at Ser-265, Ser-302, Ser-632 and Ser-1097 by RPS6KB1; phosphorylation induces accelerated degradation of IRS1. Phosphorylated on tyrosine residues in response to insulin. In skeletal muscles, dephosphorylated on Tyr-608 by TNS2 under anabolic conditions; dephosphorylation results in the proteasomal degradation of IRS1. Post-translationally, ubiquitinated by the Cul7-RING(FBXW8) complex in a mTOR-dependent manner, leading to its degradation: the Cul7-RING(FBXW8) complex recognizes and binds IRS1 previously phosphorylated by S6 kinase (RPS6KB1 or RPS6KB2). Ubiquitinated by TRAF4 through 'Lys-29' linkage; this ubiquitination regulates the interaction of IRS1 with IGFR and IRS1 tyrosine phosphorylation upon IGF1 stimulation. S-nitrosylation at by BLVRB inhibits its activity. As to expression, expressed in osteoblasts, but not in osteoclasts.

The protein localises to the cytoplasm. Its subcellular location is the nucleus. Its function is as follows. Signaling adapter protein that participates in the signal transduction from two prominent receptor tyrosine kinases, insulin receptor/INSR and insulin-like growth factor I receptor/IGF1R. Plays therefore an important role in development, growth, glucose homeostasis as well as lipid metabolism. Upon phosphorylation by the insulin receptor, functions as a signaling scaffold that propagates insulin action through binding to SH2 domain-containing proteins including the p85 regulatory subunit of PI3K, NCK1, NCK2, GRB2 or SHP2. Recruitment of GRB2 leads to the activation of the guanine nucleotide exchange factor SOS1 which in turn triggers the Ras/Raf/MEK/MAPK signaling cascade. Activation of the PI3K/AKT pathway is responsible for most of insulin metabolic effects in the cell, and the Ras/Raf/MEK/MAPK is involved in the regulation of gene expression and in cooperation with the PI3K pathway regulates cell growth and differentiation. Acts a positive regulator of the Wnt/beta-catenin signaling pathway through suppression of DVL2 autophagy-mediated degradation leading to cell proliferation. In Mus musculus (Mouse), this protein is Insulin receptor substrate 1 (Irs1).